Reading from the N-terminus, the 497-residue chain is Bifunctional protein GlmU (497 aa).

Positions 1–243 are pyrophosphorylase; sequence MTSSTTSSTD…SALVAGVNDR (243 aa). UDP-N-acetyl-alpha-D-glucosamine contacts are provided by residues 16–19, Lys30, Gln87, and 92–93; these read LAAG and GT. Residue Asp118 participates in Mg(2+) binding. Gly153, Glu168, Asn183, and Asn241 together coordinate UDP-N-acetyl-alpha-D-glucosamine. A Mg(2+)-binding site is contributed by Asn241. Positions 244–264 are linker; the sequence is VQLAALGAELNRRIVTAHQRA. The segment at 265–497 is N-acetyltransferase; sequence GVTVIDPGST…LGHHDDSQGS (233 aa). Positions 346 and 364 each coordinate UDP-N-acetyl-alpha-D-glucosamine. His376 functions as the Proton acceptor in the catalytic mechanism. The UDP-N-acetyl-alpha-D-glucosamine site is built by Tyr379 and Asn390. Acetyl-CoA contacts are provided by residues Ala393, 399–400, Ser418, and Ala436; that span reads NY. A disordered region spans residues 473–497; sequence ARAAERASGEAAEQALGHHDDSQGS. The segment covering 488–497 has biased composition (basic and acidic residues); sequence LGHHDDSQGS.

The protein in the N-terminal section; belongs to the N-acetylglucosamine-1-phosphate uridyltransferase family. It in the C-terminal section; belongs to the transferase hexapeptide repeat family. As to quaternary structure, homotrimer. The cofactor is Mg(2+).

Its subcellular location is the cytoplasm. It carries out the reaction alpha-D-glucosamine 1-phosphate + acetyl-CoA = N-acetyl-alpha-D-glucosamine 1-phosphate + CoA + H(+). The catalysed reaction is N-acetyl-alpha-D-glucosamine 1-phosphate + UTP + H(+) = UDP-N-acetyl-alpha-D-glucosamine + diphosphate. It participates in nucleotide-sugar biosynthesis; UDP-N-acetyl-alpha-D-glucosamine biosynthesis; N-acetyl-alpha-D-glucosamine 1-phosphate from alpha-D-glucosamine 6-phosphate (route II): step 2/2. Its pathway is nucleotide-sugar biosynthesis; UDP-N-acetyl-alpha-D-glucosamine biosynthesis; UDP-N-acetyl-alpha-D-glucosamine from N-acetyl-alpha-D-glucosamine 1-phosphate: step 1/1. It functions in the pathway bacterial outer membrane biogenesis; LPS lipid A biosynthesis. Functionally, catalyzes the last two sequential reactions in the de novo biosynthetic pathway for UDP-N-acetylglucosamine (UDP-GlcNAc). The C-terminal domain catalyzes the transfer of acetyl group from acetyl coenzyme A to glucosamine-1-phosphate (GlcN-1-P) to produce N-acetylglucosamine-1-phosphate (GlcNAc-1-P), which is converted into UDP-GlcNAc by the transfer of uridine 5-monophosphate (from uridine 5-triphosphate), a reaction catalyzed by the N-terminal domain. This chain is Bifunctional protein GlmU, found in Mycobacterium sp. (strain JLS).